A 1323-amino-acid polypeptide reads, in one-letter code: DNA-directed RNA polymerase subunit beta' (1323 aa).

Zn(2+)-binding residues include C60, C62, C75, and C78. Residues D535, D537, and D539 each contribute to the Mg(2+) site. The Zn(2+) site is built by C894, C977, C984, and C987.

The protein belongs to the RNA polymerase beta' chain family. As to quaternary structure, the RNAP catalytic core consists of 2 alpha, 1 beta, 1 beta' and 1 omega subunit. When a sigma factor is associated with the core the holoenzyme is formed, which can initiate transcription. It depends on Mg(2+) as a cofactor. Requires Zn(2+) as cofactor.

The catalysed reaction is RNA(n) + a ribonucleoside 5'-triphosphate = RNA(n+1) + diphosphate. In terms of biological role, DNA-dependent RNA polymerase catalyzes the transcription of DNA into RNA using the four ribonucleoside triphosphates as substrates. The sequence is that of DNA-directed RNA polymerase subunit beta' from Corynebacterium urealyticum (strain ATCC 43042 / DSM 7109).